Here is a 309-residue protein sequence, read N- to C-terminus: Porphobilinogen deaminase (309 aa).

Cys-241 carries the post-translational modification S-(dipyrrolylmethanemethyl)cysteine.

The protein belongs to the HMBS family. As to quaternary structure, monomer. Requires dipyrromethane as cofactor.

It catalyses the reaction 4 porphobilinogen + H2O = hydroxymethylbilane + 4 NH4(+). Its pathway is porphyrin-containing compound metabolism; protoporphyrin-IX biosynthesis; coproporphyrinogen-III from 5-aminolevulinate: step 2/4. Tetrapolymerization of the monopyrrole PBG into the hydroxymethylbilane pre-uroporphyrinogen in several discrete steps. The polypeptide is Porphobilinogen deaminase (Geobacillus kaustophilus (strain HTA426)).